A 370-amino-acid chain; its full sequence is MSKPEYFIGLMSGTSMDGVDAVLVDFSQAKPQLIAGHTQAIPKHLLKGLQRLCNPAADEINRLGRLDRAVGSLFADAVNALLEKTNIPKSQIIAIGSHGQTVRHMPNLEVGFTLQIGDPNTIAVETGIDVIADFRRKDIALGGQGAPLVPAFHQQVFAEKDQIRVILNIGGIANVTYLPGNSEQVLGFDTGPGNTLIDAYILQNLEQAFDEDGQWADSGNSNQALLTQMLSHPYFSLHYPKSTGRELFNQAWLEQQLANFSHLDAEDIQSTLLDLTCHSIANDINKLAPKGQLFVCGGGALNGALMKRLTQLVPGYQLQTTSALGVDAKWVEGIAFAWLAMRHHHNLPANLPAVTGASKSAVLGGRYSAK.

Residue 13–20 (GTSMDGVD) participates in ATP binding.

Belongs to the anhydro-N-acetylmuramic acid kinase family.

The enzyme catalyses 1,6-anhydro-N-acetyl-beta-muramate + ATP + H2O = N-acetyl-D-muramate 6-phosphate + ADP + H(+). The protein operates within amino-sugar metabolism; 1,6-anhydro-N-acetylmuramate degradation. Its pathway is cell wall biogenesis; peptidoglycan recycling. Catalyzes the specific phosphorylation of 1,6-anhydro-N-acetylmuramic acid (anhMurNAc) with the simultaneous cleavage of the 1,6-anhydro ring, generating MurNAc-6-P. Is required for the utilization of anhMurNAc either imported from the medium or derived from its own cell wall murein, and thus plays a role in cell wall recycling. The chain is Anhydro-N-acetylmuramic acid kinase from Shewanella denitrificans (strain OS217 / ATCC BAA-1090 / DSM 15013).